Consider the following 609-residue polypeptide: Ovochymase-2 (609 aa).

The N-terminal stretch at 1 to 22 (MPISKDKLILILGMVCLEQGHS) is a signal peptide. Residues 23–51 (ETLSSIRNPDCGQSLVKPQPQNYFSLFSR) constitute a propeptide, activation peptide. In terms of domain architecture, Peptidase S1 spans 52–299 (IVGGSQVEKG…VLPWILKHIQ (248 aa)). Residues C77 and C93 are joined by a disulfide bond. Residue H92 is the Charge relay system of the active site. A glycan (N-linked (GlcNAc...) asparagine) is linked at N104. Position 119 (E119) interacts with Ca(2+). Residue D142 is the Charge relay system of the active site. Cystine bridges form between C176-C246, C207-C225, C236-C265, and C311-C341. The Charge relay system role is filled by S240. 2 consecutive CUB domains span residues 311–421 (CSEP…YKAL) and 431–543 (CRSL…ISFI). Residue N356 is glycosylated (N-linked (GlcNAc...) asparagine). A disulfide bond links C365 and C384. N415 carries N-linked (GlcNAc...) asparagine glycosylation. 2 cysteine pairs are disulfide-bonded: C431-C458 and C485-C506. N-linked (GlcNAc...) asparagine glycosylation is found at N530 and N549. The segment at 580-609 (HTKPPYEEDIGEMPAIDSGLLKQGERRGKH) is disordered.

It belongs to the peptidase S1 family. As to expression, only expressed in uterus tissue. Expressed in the initial segment (IS) of the caput epididymis, the region most proximal to the testis.

It localises to the secreted. In terms of biological role, may be required for sperm ADAM3 processing and consequential sperm fertilizing ability. In vitro, has an endopeptidase activity. This is Ovochymase-2 from Mus musculus (Mouse).